The chain runs to 116 residues: UPF0482 protein PC1_2049 (116 aa).

The first 31 residues, 1-31, serve as a signal peptide directing secretion; the sequence is MNHYSFSSLIRAFIPLSLVIVSAAWQPAALA.

The protein belongs to the UPF0482 family.

This chain is UPF0482 protein PC1_2049, found in Pectobacterium carotovorum subsp. carotovorum (strain PC1).